The sequence spans 1571 residues: Pentafunctional AROM polypeptide (1571 aa).

The 3-dehydroquinate synthase stretch occupies residues 1-380 (MTSVEKVSIL…YQLKAHQVSK (380 aa)). NAD(+)-binding positions include 43–45 (DTN), 81–84 (ENNK), 112–114 (GGV), and aspartate 117. Arginine 128 is a 7-phospho-2-dehydro-3-deoxy-D-arabino-heptonate binding site. 137 to 138 (TS) is a binding site for NAD(+). 7-phospho-2-dehydro-3-deoxy-D-arabino-heptonate contacts are provided by aspartate 144 and lysine 150. Lysine 159 serves as a coordination point for NAD(+). A 7-phospho-2-dehydro-3-deoxy-D-arabino-heptonate-binding site is contributed by asparagine 160. NAD(+)-binding positions include 177–180 (FLET) and asparagine 188. Glutamate 192 lines the Zn(2+) pocket. Residues 192 to 195 (EVVK) and lysine 244 contribute to the 7-phospho-2-dehydro-3-deoxy-D-arabino-heptonate site. The active-site Proton acceptor; for 3-dehydroquinate synthase activity is glutamate 254. 7-phospho-2-dehydro-3-deoxy-D-arabino-heptonate is bound by residues 258–262 (RNLLN) and histidine 265. Histidine 265 is a binding site for Zn(2+). Histidine 269 (proton acceptor; for 3-dehydroquinate synthase activity) is an active-site residue. 2 residues coordinate 7-phospho-2-dehydro-3-deoxy-D-arabino-heptonate: histidine 281 and lysine 352. Residue histidine 281 participates in Zn(2+) binding. Residues 393-843 (VHPFDDKLIP…WDILHTKFKV (451 aa)) form an EPSP synthase region. Cysteine 825 acts as the For EPSP synthase activity in catalysis. Residues 868–1058 (KRSIIVIGMR…IPKKRSFYTS (191 aa)) form a shikimate kinase region. Position 875–882 (875–882 (GMRGAGKS)) interacts with ATP. Residues 1059–1271 (LTFSDLTEVA…GNEGALDVAQ (213 aa)) are 3-dehydroquinase. Lysine 1204 functions as the Schiff-base intermediate with substrate; for 3-dehydroquinate dehydratase activity in the catalytic mechanism. Residues 1284–1571 (EKHFWIVGNP…DVVHDAVVNQ (288 aa)) form a shikimate dehydrogenase region.

It in the N-terminal section; belongs to the sugar phosphate cyclases superfamily. Dehydroquinate synthase family. The protein in the 2nd section; belongs to the EPSP synthase family. This sequence in the 3rd section; belongs to the shikimate kinase family. In the 4th section; belongs to the type-I 3-dehydroquinase family. It in the C-terminal section; belongs to the shikimate dehydrogenase family. In terms of assembly, homodimer. The cofactor is Zn(2+).

It is found in the cytoplasm. The catalysed reaction is 7-phospho-2-dehydro-3-deoxy-D-arabino-heptonate = 3-dehydroquinate + phosphate. It catalyses the reaction 3-dehydroquinate = 3-dehydroshikimate + H2O. The enzyme catalyses shikimate + NADP(+) = 3-dehydroshikimate + NADPH + H(+). It carries out the reaction shikimate + ATP = 3-phosphoshikimate + ADP + H(+). The catalysed reaction is 3-phosphoshikimate + phosphoenolpyruvate = 5-O-(1-carboxyvinyl)-3-phosphoshikimate + phosphate. The protein operates within metabolic intermediate biosynthesis; chorismate biosynthesis; chorismate from D-erythrose 4-phosphate and phosphoenolpyruvate: step 2/7. Its pathway is metabolic intermediate biosynthesis; chorismate biosynthesis; chorismate from D-erythrose 4-phosphate and phosphoenolpyruvate: step 3/7. It participates in metabolic intermediate biosynthesis; chorismate biosynthesis; chorismate from D-erythrose 4-phosphate and phosphoenolpyruvate: step 4/7. It functions in the pathway metabolic intermediate biosynthesis; chorismate biosynthesis; chorismate from D-erythrose 4-phosphate and phosphoenolpyruvate: step 5/7. The protein operates within metabolic intermediate biosynthesis; chorismate biosynthesis; chorismate from D-erythrose 4-phosphate and phosphoenolpyruvate: step 6/7. Its function is as follows. The AROM polypeptide catalyzes 5 consecutive enzymatic reactions in prechorismate polyaromatic amino acid biosynthesis. The chain is Pentafunctional AROM polypeptide from Scheffersomyces stipitis (strain ATCC 58785 / CBS 6054 / NBRC 10063 / NRRL Y-11545) (Yeast).